The primary structure comprises 425 residues: Tyrosine--tRNA ligase (425 aa).

Tyrosine 37 contributes to the L-tyrosine binding site. The 'HIGH' region signature appears at 42–51 (PTADSLHLGH). Residues tyrosine 174 and glutamine 178 each contribute to the L-tyrosine site. The short motif at 234-238 (KFGKS) is the 'KMSKS' region element. Lysine 237 contributes to the ATP binding site. The region spanning 357–422 (DGLIDALAAS…RGKKLYALLV (66 aa)) is the S4 RNA-binding domain.

It belongs to the class-I aminoacyl-tRNA synthetase family. TyrS type 1 subfamily. As to quaternary structure, homodimer.

The protein localises to the cytoplasm. The catalysed reaction is tRNA(Tyr) + L-tyrosine + ATP = L-tyrosyl-tRNA(Tyr) + AMP + diphosphate + H(+). Its function is as follows. Catalyzes the attachment of tyrosine to tRNA(Tyr) in a two-step reaction: tyrosine is first activated by ATP to form Tyr-AMP and then transferred to the acceptor end of tRNA(Tyr). The protein is Tyrosine--tRNA ligase of Laribacter hongkongensis (strain HLHK9).